The following is a 593-amino-acid chain: Aspartate--tRNA(Asp/Asn) ligase (593 aa).

Glutamate 175 contributes to the L-aspartate binding site. Residues glutamine 199–lysine 202 are aspartate. L-aspartate contacts are provided by arginine 221 and histidine 452. Position 221–223 (arginine 221–glutamate 223) interacts with ATP. ATP is bound at residue glutamate 486. Arginine 493 contacts L-aspartate. Glycine 538–arginine 541 serves as a coordination point for ATP.

It belongs to the class-II aminoacyl-tRNA synthetase family. Type 1 subfamily. In terms of assembly, homodimer.

The protein localises to the cytoplasm. The enzyme catalyses tRNA(Asx) + L-aspartate + ATP = L-aspartyl-tRNA(Asx) + AMP + diphosphate. Functionally, aspartyl-tRNA synthetase with relaxed tRNA specificity since it is able to aspartylate not only its cognate tRNA(Asp) but also tRNA(Asn). Reaction proceeds in two steps: L-aspartate is first activated by ATP to form Asp-AMP and then transferred to the acceptor end of tRNA(Asp/Asn). The chain is Aspartate--tRNA(Asp/Asn) ligase from Novosphingobium aromaticivorans (strain ATCC 700278 / DSM 12444 / CCUG 56034 / CIP 105152 / NBRC 16084 / F199).